The chain runs to 272 residues: Indole-3-glycerol phosphate synthase (272 aa).

Belongs to the TrpC family.

The catalysed reaction is 1-(2-carboxyphenylamino)-1-deoxy-D-ribulose 5-phosphate + H(+) = (1S,2R)-1-C-(indol-3-yl)glycerol 3-phosphate + CO2 + H2O. It functions in the pathway amino-acid biosynthesis; L-tryptophan biosynthesis; L-tryptophan from chorismate: step 4/5. The chain is Indole-3-glycerol phosphate synthase from Mycolicibacterium gilvum (strain PYR-GCK) (Mycobacterium gilvum (strain PYR-GCK)).